A 250-amino-acid chain; its full sequence is Probable transcriptional regulatory protein RHA1_ro06891 (250 aa).

It belongs to the TACO1 family.

Its subcellular location is the cytoplasm. In Rhodococcus jostii (strain RHA1), this protein is Probable transcriptional regulatory protein RHA1_ro06891.